The chain runs to 181 residues: Endoribonuclease YbeY (181 aa).

Zn(2+) is bound by residues His-140, His-144, and His-150.

This sequence belongs to the endoribonuclease YbeY family. Requires Zn(2+) as cofactor.

It localises to the cytoplasm. Single strand-specific metallo-endoribonuclease involved in late-stage 70S ribosome quality control and in maturation of the 3' terminus of the 16S rRNA. The sequence is that of Endoribonuclease YbeY from Dinoroseobacter shibae (strain DSM 16493 / NCIMB 14021 / DFL 12).